Consider the following 672-residue polypeptide: Negative growth regulatory protein NGR1 (672 aa).

An N-acetylmethionine modification is found at Met-1. Composition is skewed to polar residues over residues 1–13 (MMSN…QRQE) and 23–32 (SSTVETSTEP). Disordered regions lie at residues 1 to 40 (MMSN…WMGD) and 77 to 102 (SSTS…NSTD). At Met-2 the chain carries N-acetylserine. RRM domains follow at residues 36–159 (LWMG…YSPT), 192–271 (FSLF…YATP), and 360–432 (TTVF…WGRP). Residues 77–96 (SSTSSSNNNTSEENAENQQS) are compositionally biased toward low complexity. At Ser-524 the chain carries Phosphoserine. The tract at residues 640-672 (LNIAPNSNNSKSSIMNKHPNRNNVPPIHPSLLH) is disordered. A compositionally biased stretch (low complexity) spans 645-656 (NSNNSKSSIMNK).

In terms of biological role, may be an RNA-binding protein involved in control of an RNA processing pathway that influences the regulation of cell growth in early log phase. Can bind to RNA and single-stranded DNA but not double-stranded DNA. The sequence is that of Negative growth regulatory protein NGR1 (NGR1) from Saccharomyces cerevisiae (strain ATCC 204508 / S288c) (Baker's yeast).